A 368-amino-acid chain; its full sequence is Alanine racemase (368 aa).

Catalysis depends on Lys-40, which acts as the Proton acceptor; specific for D-alanine. Residue Lys-40 is modified to N6-(pyridoxal phosphate)lysine. Residue Arg-134 participates in substrate binding. Residue Tyr-263 is the Proton acceptor; specific for L-alanine of the active site. Met-310 is a substrate binding site.

It belongs to the alanine racemase family. Pyridoxal 5'-phosphate is required as a cofactor.

It carries out the reaction L-alanine = D-alanine. It participates in amino-acid biosynthesis; D-alanine biosynthesis; D-alanine from L-alanine: step 1/1. Functionally, catalyzes the interconversion of L-alanine and D-alanine. May also act on other amino acids. This chain is Alanine racemase (alr), found in Listeria monocytogenes serotype 1/2a (strain 10403S).